We begin with the raw amino-acid sequence, 435 residues long: Tol-Pal system protein TolB (435 aa).

Positions Met-1–Ala-28 are cleaved as a signal peptide. A disordered region spans residues Ser-288–Asp-310.

This sequence belongs to the TolB family. As to quaternary structure, the Tol-Pal system is composed of five core proteins: the inner membrane proteins TolA, TolQ and TolR, the periplasmic protein TolB and the outer membrane protein Pal. They form a network linking the inner and outer membranes and the peptidoglycan layer.

The protein resides in the periplasm. Part of the Tol-Pal system, which plays a role in outer membrane invagination during cell division and is important for maintaining outer membrane integrity. The chain is Tol-Pal system protein TolB from Rhizobium johnstonii (strain DSM 114642 / LMG 32736 / 3841) (Rhizobium leguminosarum bv. viciae).